Consider the following 814-residue polypeptide: Echinoderm microtubule-associated protein-like 1 (814 aa).

The stretch at 31–72 forms a coiled coil; it reads SMEVSDRIASLEQRVQMQEDDIQLLKSALADVVRRLNITEEQ. The segment at 77–180 is disordered; sequence NRKGPTKARP…ESKPKEPAFS (104 aa). Residues 92–101 show a composition bias toward polar residues; that stretch reads PLRTTVNNGT. Residues 103-115 are compositionally biased toward low complexity; that stretch reads LPKKPSASLPAPS. The span at 127–137 shows a compositional bias: polar residues; it reads KSINRTSSSER. Positions 142–152 are enriched in basic and acidic residues; sequence GRRESSGDSKG. Positions 155–167 are enriched in low complexity; that stretch reads NRTGSTSSSSSGK. The interval 175-814 is tandem atypical propeller in EMLs; that stretch reads KEPAFSPEEG…DTSIMQWRVI (640 aa). 12 WD repeats span residues 260 to 309, 314 to 357, 362 to 399, 408 to 445, 449 to 488, 492 to 529, 534 to 571, 577 to 612, 616 to 654, 663 to 700, 708 to 767, and 774 to 813; these read EQLQ…IWDS, TLHV…VWDW, RLAD…FWTL, QGLF…VWGK, RISY…SWNG, KLHK…LQGT, FTPI…LWDA, VWDK…VFDT, DLVT…IYGV, RVGK…YWVP, SVET…LFSY, and APSH…QWRV.

This sequence belongs to the WD repeat EMAP family. As to quaternary structure, homotrimer; self-association is mediated by the N-terminal coiled coil. Does not interact with EML3. Binds unpolymerized tubulins via its WD repeat region. Binds repolymerizing microtubules. Interacts with TASOR. As to expression, detected in adult brain cortex, hippocampus and thalamus. Expressed in the stomach, lungs and in Sertoli cells of the testis.

The protein localises to the cytoplasm. It localises to the perinuclear region. It is found in the cytoskeleton. Functionally, modulates the assembly and organization of the microtubule cytoskeleton, and probably plays a role in regulating the orientation of the mitotic spindle and the orientation of the plane of cell division. Required for normal proliferation of neuronal progenitor cells in the developing brain and for normal brain development. Does not affect neuron migration per se. This is Echinoderm microtubule-associated protein-like 1 (Eml1) from Mus musculus (Mouse).